The primary structure comprises 101 residues: NADH-quinone oxidoreductase subunit K (101 aa).

3 helical membrane-spanning segments follow: residues 5–25, 30–50, and 61–81; these read LTHYVVASGILFAIGLAGIIL, IVILMCLEIMLNAANLALVAF, and VLVFFVITVAAAEVAVGLALI.

It belongs to the complex I subunit 4L family. As to quaternary structure, NDH-1 is composed of 14 different subunits. Subunits NuoA, H, J, K, L, M, N constitute the membrane sector of the complex.

The protein resides in the cell inner membrane. The catalysed reaction is a quinone + NADH + 5 H(+)(in) = a quinol + NAD(+) + 4 H(+)(out). Functionally, NDH-1 shuttles electrons from NADH, via FMN and iron-sulfur (Fe-S) centers, to quinones in the respiratory chain. The immediate electron acceptor for the enzyme in this species is believed to be ubiquinone. Couples the redox reaction to proton translocation (for every two electrons transferred, four hydrogen ions are translocated across the cytoplasmic membrane), and thus conserves the redox energy in a proton gradient. The protein is NADH-quinone oxidoreductase subunit K of Methylacidiphilum infernorum (isolate V4) (Methylokorus infernorum (strain V4)).